We begin with the raw amino-acid sequence, 1942 residues long: Myosin-2 (1942 aa).

The Myosin N-terminal SH3-like domain maps to 33 to 82 (DAKTSVFVAEPKESFVKGTIQSKDAGKVTVKTEAGATLTVKEDQIFPMNP). Phosphothreonine occurs at positions 64 and 69. In terms of domain architecture, Myosin motor spans 86 to 785 (DKIEDMAMMT…LLGLLEEMRD (700 aa)). 179-186 (GESGAGKT) is a binding site for ATP. A Phosphotyrosine modification is found at Tyr389. Thr419 carries the phosphothreonine modification. Ser625 is modified (phosphoserine). An actin-binding region spans residues 662–684 (LNKLMTNLRSTHPHFVRCIIPNE). The residue at position 760 (His760) is a Pros-methylhistidine. One can recognise an IQ domain in the interval 788 to 817 (LAQLITRTQAMCRGFLARVEYQKMVERRES). Positions 849-1930 (SAETEKEMAT…ESQVNKLRVK (1082 aa)) form a coiled coil. Ser1095 and Ser1099 each carry phosphoserine. The tract at residues 1130–1175 (EAERASRAKAEKQRSDLSRELEEISERLEEAGGATSAQIEMNKKRE) is disordered. Over residues 1131-1159 (AERASRAKAEKQRSDLSRELEEISERLEE) the composition is skewed to basic and acidic residues. Phosphoserine is present on residues Ser1165 and Ser1240. Phosphothreonine is present on Thr1244. At Ser1246 the chain carries Phosphoserine. Position 1258 is a phosphothreonine (Thr1258). Phosphoserine is present on Ser1264. Thr1289 bears the Phosphothreonine mark. Residues Ser1291, Ser1295, Ser1306, and Ser1309 each carry the phosphoserine modification. Tyr1467 bears the Phosphotyrosine mark. Thr1470 carries the post-translational modification Phosphothreonine. Ser1477 bears the Phosphoserine mark. Tyr1495 bears the Phosphotyrosine mark. Ser1498 is modified (phosphoserine). Residue Thr1504 is modified to Phosphothreonine. Ser1517 is subject to Phosphoserine. Thr1520 is subject to Phosphothreonine. A phosphoserine mark is found at Ser1557, Ser1577, Ser1603, Ser1606, Ser1717, and Ser1729. Residues Thr1733 and Thr1739 each carry the phosphothreonine modification. Ser1742 bears the Phosphoserine mark.

The protein belongs to the TRAFAC class myosin-kinesin ATPase superfamily. Myosin family. Muscle myosin is a hexameric protein that consists of 2 heavy chain subunits (MHC), 2 alkali light chain subunits (MLC) and 2 regulatory light chain subunits (MLC-2). Interacts with GCSAM. Expressed in type 2a myofibers in the tibialis anterior and soleus muscles (at protein level).

The protein localises to the cytoplasm. It is found in the myofibril. Functionally, myosins are actin-based motor molecules with ATPase activity essential for muscle contraction. The polypeptide is Myosin-2 (Mus musculus (Mouse)).